The chain runs to 439 residues: Structure-specific endonuclease subunit SLX1 homolog (439 aa).

2 disordered regions span residues 1–28 (METF…GVPK) and 117–140 (DDDD…LRAL). Positions 125 to 136 (ESSTEHADDDLN) are enriched in basic and acidic residues. Residues 166 to 253 (EFYGVYCLIS…PAVSKSLKEK (88 aa)) form the GIY-YIG domain. The SLX1-type zinc finger occupies 335-390 (CRLCGKDIEKLWGLVRCISQSCHSHFHSKCLAEHGLKNKNEYADQIYPLKSNCPIC).

Belongs to the SLX1 family. As to quaternary structure, forms a heterodimer with him-18/slx-4. It depends on a divalent metal cation as a cofactor.

The protein resides in the nucleus. Catalytic subunit of a heterodimeric structure-specific endonuclease that resolves DNA secondary structures generated during DNA repair and recombination. Has endonuclease activity towards branched DNA substrates, introducing single-strand cuts in duplex DNA close to junctions with ss-DNA (Potential). Has a preference for replication forks over 5' flap structures or Holliday junctions and shows much lower activity toward 3' flap structures. Required for proper crossover distribution through inhibition of crossover formation at the central region of chromosomes. This chain is Structure-specific endonuclease subunit SLX1 homolog, found in Caenorhabditis briggsae.